The chain runs to 181 residues: TATA-box-binding protein (181 aa).

A run of 2 repeats spans residues 7-83 and 98-173.

This sequence belongs to the TBP family.

In terms of biological role, general factor that plays a role in the activation of archaeal genes transcribed by RNA polymerase. Binds specifically to the TATA box promoter element which lies close to the position of transcription initiation. This is TATA-box-binding protein from Methanococcus vannielii (strain ATCC 35089 / DSM 1224 / JCM 13029 / OCM 148 / SB).